Here is a 375-residue protein sequence, read N- to C-terminus: Ketohexokinase (375 aa).

Aspartate 319 is a binding site for beta-D-fructose.

This sequence belongs to the carbohydrate kinase PfkB family. In terms of assembly, homodimer.

The catalysed reaction is beta-D-fructose + ATP = beta-D-fructose 1-phosphate + ADP + H(+). Its pathway is carbohydrate metabolism; fructose metabolism. Its activity is regulated as follows. Activated in the presence of 0.5 M KCl. 85% activity at 3.5 M KCl. 60% activity without KCl. Its function is as follows. Catalyzes the ATP-dependent phosphorylation of the ketose sugar fructose to fructose-1-phosphate. Does not produce fructose-6-phosphate. The sugars D-glucose, D-galactose, L-rhamnose, D-xylose, L-arabinose and D-ribose are not substrates of this enzyme. This chain is Ketohexokinase, found in Haloferax volcanii (strain ATCC 29605 / DSM 3757 / JCM 8879 / NBRC 14742 / NCIMB 2012 / VKM B-1768 / DS2) (Halobacterium volcanii).